The chain runs to 681 residues: Chaperone protein HtpG (681 aa).

The interval 1–326 (MQKGNIGVTT…SPDIPLNVSR (326 aa)) is a; substrate-binding. Residues 327-545 (SYLQSDSNVK…YMRRMKEMAN (219 aa)) form a b region. Residues 546-681 (IQAGMSFYGE…NFVKRSIELI (136 aa)) form a c region. A disordered region spans residues 589-620 (IQTEMNSVSKRRNELKDSQKDKKEEDIPTAEK). Basic and acidic residues predominate over residues 599 to 620 (RRNELKDSQKDKKEEDIPTAEK).

The protein belongs to the heat shock protein 90 family. As to quaternary structure, homodimer.

Its subcellular location is the cytoplasm. Its function is as follows. Molecular chaperone. Has ATPase activity. The sequence is that of Chaperone protein HtpG from Bacteroides thetaiotaomicron (strain ATCC 29148 / DSM 2079 / JCM 5827 / CCUG 10774 / NCTC 10582 / VPI-5482 / E50).